The following is a 58-amino-acid chain: uncharacterized protein (58 aa).

Residues 18–38 traverse the membrane as a helical segment; that stretch reads WLMIVLLFCSTGMVFLATILE.

The protein localises to the membrane. This is an uncharacterized protein from Saccharomyces cerevisiae (strain ATCC 204508 / S288c) (Baker's yeast).